A 179-amino-acid polypeptide reads, in one-letter code: Inner membrane-spanning protein YciB (179 aa).

Transmembrane regions (helical) follow at residues F3–Y23, T24–H44, P49–H69, W76–W96, A121–F141, and F149–L169.

This sequence belongs to the YciB family.

The protein resides in the cell inner membrane. In terms of biological role, plays a role in cell envelope biogenesis, maintenance of cell envelope integrity and membrane homeostasis. This Cupriavidus necator (strain ATCC 17699 / DSM 428 / KCTC 22496 / NCIMB 10442 / H16 / Stanier 337) (Ralstonia eutropha) protein is Inner membrane-spanning protein YciB.